Here is a 261-residue protein sequence, read N- to C-terminus: Major biofilm matrix component (261 aa).

Residues 1-27 form the signal peptide; it reads MGMKKKLSLGVASAALGLALVGGGTWA. A disordered region spans residues 241-261; it reads DHTDKDGYVKENEKAHSEDKN.

Belongs to the peptidase M73 family. As to quaternary structure, forms fibers. Fibers have variable length and are 10-15 nm width. Interacts with obg (AC P20964) in pull-down experiments.

It is found in the secreted. Its subcellular location is the forespore intermembrane space. Functionally, tasA is the major protein component of the biofilm extracellular matrix. It forms amyloid fibers that bind cells together in the biofilm. Exhibits an antibacterial activity against a variety of Gram-positive and Gram-negative bacteria. In laboratory strains, is also involved in proper spore coat assembly. This is Major biofilm matrix component from Bacillus subtilis (strain 168).